The sequence spans 201 residues: MSHDTNTVDSRTHEGQLNKLGFWIFLTAEFSLFGTLFATLLTLQHGGDYAGKMTTELFELPLVLIMTFALLISSYTCGISIYYMRKEKQNLMMFWMILTVLLGLVFVGFEIYEFAHYVSEGVTPQIGSYWSSFFILLGTHGAHVSLGIGWIICLLIQVATRGLNKYNAPKLFIVSLYWHFLDVVWIFIFTAVYMIGMVYSG.

Transmembrane regions (helical) follow at residues L20–L40, L62–Y82, L91–I111, F133–C153, and F172–V192.

The protein belongs to the cytochrome c oxidase subunit 3 family.

It localises to the cell membrane. The enzyme catalyses 2 a quinol + O2 = 2 a quinone + 2 H2O. Its function is as follows. Catalyzes quinol oxidation with the concomitant reduction of oxygen to water. This is Probable quinol oxidase subunit 3 (qoxC) from Staphylococcus haemolyticus (strain JCSC1435).